The chain runs to 146 residues: Large ribosomal subunit protein bL9 (146 aa).

The protein belongs to the bacterial ribosomal protein bL9 family.

In terms of biological role, binds to the 23S rRNA. This Deinococcus deserti (strain DSM 17065 / CIP 109153 / LMG 22923 / VCD115) protein is Large ribosomal subunit protein bL9.